Here is a 122-residue protein sequence, read N- to C-terminus: Large ribosomal subunit protein uL14 (122 aa).

Belongs to the universal ribosomal protein uL14 family. In terms of assembly, part of the 50S ribosomal subunit. Forms a cluster with proteins L3 and L19. In the 70S ribosome, L14 and L19 interact and together make contacts with the 16S rRNA in bridges B5 and B8.

Its function is as follows. Binds to 23S rRNA. Forms part of two intersubunit bridges in the 70S ribosome. This Protochlamydia amoebophila (strain UWE25) protein is Large ribosomal subunit protein uL14.